Here is a 218-residue protein sequence, read N- to C-terminus: Peroxynitrite isomerase 2 (218 aa).

Positions 1–24 are disordered; that stretch reads MTPAGDTPERGSGDRAVAEAAERA. A compositionally biased stretch (basic and acidic residues) spans 7–24; that stretch reads TPERGSGDRAVAEAAERA. The GXWXGXG signature appears at 65 to 71; that stretch reads GVWRGEG. 2 residues coordinate heme b: Lys181 and His208.

This sequence belongs to the nitrobindin family. As to quaternary structure, homodimer. Requires heme b as cofactor.

The enzyme catalyses peroxynitrite = nitrate. It functions in the pathway nitrogen metabolism. Heme-binding protein able to scavenge peroxynitrite and to protect free L-tyrosine against peroxynitrite-mediated nitration, by acting as a peroxynitrite isomerase that converts peroxynitrite to nitrate. Therefore, this protein likely plays a role in peroxynitrite sensing and in the detoxification of reactive nitrogen and oxygen species (RNS and ROS, respectively). Is able to bind nitric oxide (NO) in vitro, but may act as a sensor of peroxynitrite levels in vivo. The polypeptide is Peroxynitrite isomerase 2 (Mycolicibacterium smegmatis (strain ATCC 700084 / mc(2)155) (Mycobacterium smegmatis)).